We begin with the raw amino-acid sequence, 430 residues long: Histidine--tRNA ligase (430 aa).

It belongs to the class-II aminoacyl-tRNA synthetase family. As to quaternary structure, homodimer.

It localises to the cytoplasm. It catalyses the reaction tRNA(His) + L-histidine + ATP = L-histidyl-tRNA(His) + AMP + diphosphate + H(+). This is Histidine--tRNA ligase from Chlorobium limicola (strain DSM 245 / NBRC 103803 / 6330).